A 178-amino-acid chain; its full sequence is Large ribosomal subunit protein uL6 (178 aa).

This sequence belongs to the universal ribosomal protein uL6 family. As to quaternary structure, part of the 50S ribosomal subunit.

In terms of biological role, this protein binds to the 23S rRNA, and is important in its secondary structure. It is located near the subunit interface in the base of the L7/L12 stalk, and near the tRNA binding site of the peptidyltransferase center. The chain is Large ribosomal subunit protein uL6 from Sulfurovum sp. (strain NBC37-1).